A 383-amino-acid chain; its full sequence is S-adenosylmethionine synthase (383 aa).

Position 15 (H15) interacts with ATP. D17 is a binding site for Mg(2+). E43 lines the K(+) pocket. The L-methionine site is built by E56 and Q99. Residues Q99–R109 are flexible loop. ATP is bound by residues D164 to K166, R230 to F231, D239, R245 to K246, A262, and K266. D239 contributes to the L-methionine binding site. K270 serves as a coordination point for L-methionine.

It belongs to the AdoMet synthase family. Homotetramer; dimer of dimers. Mg(2+) serves as cofactor. The cofactor is K(+).

The protein resides in the cytoplasm. The catalysed reaction is L-methionine + ATP + H2O = S-adenosyl-L-methionine + phosphate + diphosphate. It participates in amino-acid biosynthesis; S-adenosyl-L-methionine biosynthesis; S-adenosyl-L-methionine from L-methionine: step 1/1. Its function is as follows. Catalyzes the formation of S-adenosylmethionine (AdoMet) from methionine and ATP. The overall synthetic reaction is composed of two sequential steps, AdoMet formation and the subsequent tripolyphosphate hydrolysis which occurs prior to release of AdoMet from the enzyme. The sequence is that of S-adenosylmethionine synthase from Actinobacillus succinogenes (strain ATCC 55618 / DSM 22257 / CCUG 43843 / 130Z).